We begin with the raw amino-acid sequence, 419 residues long: Histidine--tRNA ligase (419 aa).

The protein belongs to the class-II aminoacyl-tRNA synthetase family. As to quaternary structure, homodimer.

It is found in the cytoplasm. It catalyses the reaction tRNA(His) + L-histidine + ATP = L-histidyl-tRNA(His) + AMP + diphosphate + H(+). The polypeptide is Histidine--tRNA ligase (Methylobacillus flagellatus (strain ATCC 51484 / DSM 6875 / VKM B-1610 / KT)).